The primary structure comprises 380 residues: Histone deacetylase-like amidohydrolase (380 aa).

The active-site Proton donor/acceptor is the H144. The Zn(2+) site is built by D181, H183, and D269.

Belongs to the histone deacetylase family. Homotetramer; dimer of head-to-head dimers. Requires Zn(2+) as cofactor.

Is inhibited by azobenzenes, stilbenes and arylazopyrazoles. Probable protein deacetylase that catalyzes deacetylation of acetylated lysine residues. In vitro, exhibits high activity against artificial HDAC (histone deacetylase) substrates containing acetylated and trifluoroacetylated lysine residues. Is not able to deacetylate acetylated polyamines. The sequence is that of Histone deacetylase-like amidohydrolase from Pseudomonas aeruginosa (strain ATCC 15692 / DSM 22644 / CIP 104116 / JCM 14847 / LMG 12228 / 1C / PRS 101 / PAO1).